The primary structure comprises 822 residues: Probable alpha,alpha-trehalose-phosphate synthase [UDP-forming] 2 (822 aa).

A glycosyltransferase region spans residues 12–479 (PRLLVVANRL…GLDFMSELNG (468 aa)).

It in the N-terminal section; belongs to the glycosyltransferase 20 family. The protein in the C-terminal section; belongs to the trehalose phosphatase family.

It catalyses the reaction D-glucose 6-phosphate + UDP-alpha-D-glucose = alpha,alpha-trehalose 6-phosphate + UDP + H(+). The protein is Probable alpha,alpha-trehalose-phosphate synthase [UDP-forming] 2 (TPS2) of Arabidopsis thaliana (Mouse-ear cress).